The following is a 299-amino-acid chain: MFLMGPTASGKTALAIEMAQKHNCEIISVDSALIYKQMDIGTAKPNAAELALAPHKLIDILDPSESYSAADFRRDALIEIEAIIKRGKTPLLVGGTMMYFKALLEGLSPLPSADETIRQQIQTRADIEGWEALHQSLCEIDPVAGARIHPNDPQRLSRALEVYYISGKTMTELTQTKSAALPYEVVQFAIAPLDRKVLHELIAKRFTIMLEQGFVEEVNSLMARGDLHLDLPSMRCVGYRQCWQYLEGEFDYDTMVEKATAATRQLAKRQLTWLRGWPDVHWLESGAESNLVTLQRQRG.

5 to 12 is a binding site for ATP; it reads GPTASGKT. 7–12 serves as a coordination point for substrate; that stretch reads TASGKT. Interaction with substrate tRNA regions lie at residues 30-33, 154-158, and 235-240; these read DSAL, QRLSR, and RCVGYR.

The protein belongs to the IPP transferase family. As to quaternary structure, monomer. Requires Mg(2+) as cofactor.

It carries out the reaction adenosine(37) in tRNA + dimethylallyl diphosphate = N(6)-dimethylallyladenosine(37) in tRNA + diphosphate. Its function is as follows. Catalyzes the transfer of a dimethylallyl group onto the adenine at position 37 in tRNAs that read codons beginning with uridine, leading to the formation of N6-(dimethylallyl)adenosine (i(6)A). This Shewanella denitrificans (strain OS217 / ATCC BAA-1090 / DSM 15013) protein is tRNA dimethylallyltransferase.